Consider the following 542-residue polypeptide: Calcium-dependent protein kinase 15 (542 aa).

The tract at residues 1-73 (MGARASRHRQ…QAPQQAAAED (73 aa)) is disordered. Residue glycine 2 is the site of N-myristoyl glycine attachment. Residues 12–21 (PDQSQSQSPS) show a composition bias toward low complexity. A compositionally biased stretch (basic residues) spans 22–40 (PHHKHHHHHQTTRAPKPKP). Residues 41 to 60 (KPQPPPPQQPRSQPPPPPRH) show a composition bias toward pro residues. Low complexity predominate over residues 61-71 (QPQQAPQQAAA). The 259-residue stretch at 90–348 (YTFGRELGRG…AAEILNHPWI (259 aa)) folds into the Protein kinase domain. ATP is bound by residues 96 to 104 (LGRGQFGVT) and lysine 119. Aspartate 214 acts as the Proton acceptor in catalysis. The tract at residues 354–384 (APDKPLDITVISRMKQFRAMNKLKKVALKVV) is autoinhibitory domain. 4 consecutive EF-hand domains span residues 391–426 (EEIV…LGTK), 427–462 (ISES…MNRL), 463–497 (EKED…KYDM), and 498–533 (GDEA…NSPE). The Ca(2+) site is built by aspartate 404, aspartate 406, serine 408, threonine 410, glutamate 415, aspartate 440, aspartate 442, asparagine 444, serine 446, glutamate 451, aspartate 476, aspartate 478, serine 480, glutamate 487, aspartate 511, aspartate 513, aspartate 515, arginine 517, and glutamate 522.

The protein belongs to the protein kinase superfamily. Ser/Thr protein kinase family. CDPK subfamily.

It is found in the membrane. It catalyses the reaction L-seryl-[protein] + ATP = O-phospho-L-seryl-[protein] + ADP + H(+). The enzyme catalyses L-threonyl-[protein] + ATP = O-phospho-L-threonyl-[protein] + ADP + H(+). Its activity is regulated as follows. Activated by calcium. Autophosphorylation may play an important role in the regulation of the kinase activity. May play a role in signal transduction pathways that involve calcium as a second messenger. This is Calcium-dependent protein kinase 15 from Oryza sativa subsp. japonica (Rice).